Reading from the N-terminus, the 556-residue chain is CTP synthase (556 aa).

The interval 1-266 (MKYIFVTGGV…GKVVEDLLGL (266 aa)) is amidoligase domain. S12 is a CTP binding site. S12 is a binding site for UTP. 13-18 (SLGKGV) contacts ATP. Y53 contacts L-glutamine. D70 contributes to the ATP binding site. Residues D70 and E140 each coordinate Mg(2+). Residues 147–149 (DIE), 187–192 (KTKPTQ), and K223 each bind CTP. UTP is bound by residues 187-192 (KTKPTQ) and K223. A Glutamine amidotransferase type-1 domain is found at 291–544 (TIAIAGKYTE…VKAALRGQSS (254 aa)). G356 contacts L-glutamine. The Nucleophile; for glutamine hydrolysis role is filled by C383. L-glutamine is bound by residues 384 to 387 (LGMQ), E407, and R467. Catalysis depends on residues H517 and E519.

This sequence belongs to the CTP synthase family. As to quaternary structure, homotetramer.

It catalyses the reaction UTP + L-glutamine + ATP + H2O = CTP + L-glutamate + ADP + phosphate + 2 H(+). The enzyme catalyses L-glutamine + H2O = L-glutamate + NH4(+). The catalysed reaction is UTP + NH4(+) + ATP = CTP + ADP + phosphate + 2 H(+). The protein operates within pyrimidine metabolism; CTP biosynthesis via de novo pathway; CTP from UDP: step 2/2. With respect to regulation, allosterically activated by GTP, when glutamine is the substrate; GTP has no effect on the reaction when ammonia is the substrate. The allosteric effector GTP functions by stabilizing the protein conformation that binds the tetrahedral intermediate(s) formed during glutamine hydrolysis. Inhibited by the product CTP, via allosteric rather than competitive inhibition. Catalyzes the ATP-dependent amination of UTP to CTP with either L-glutamine or ammonia as the source of nitrogen. Regulates intracellular CTP levels through interactions with the four ribonucleotide triphosphates. The polypeptide is CTP synthase (Deinococcus deserti (strain DSM 17065 / CIP 109153 / LMG 22923 / VCD115)).